The primary structure comprises 614 residues: MANNIDILDYCHSTNDVVQNIVNYKKNNDNYNYLEKHDDENAGISKNNIGVNSNYNRVFVFNNKRGDETKQIDTNMESITPYININSLESTKKINLVDESSKNYNMGNNWYHQNKYNNKMNNSKNSKNSHNKHISIAHIKYDDQEINEKGKNKLYEENQTNTKKTWKRRAFSPFTPGGVRSSTVLFLCTAIGVGLLSIPYVFSELGIILSIILILLNSLESYITTNILCMSSLEHNIFVYGNLLEKIGNKYYKTLIDFGLTFSFLSGYVLVLILVNDYLSNILYTFNFPSFISNRIFITIVICLLVLPLTFREHIGSINCFLVFSLFSITLTVLAVGYQSKYYMSLLPEKNISLFKINKHFFKCFNILLFSFSQQSNACFITGQFNQPTQRRVTKSESRSILIQVIFYTLFGLLGYLSFLNTTKDNIILNYEETNMSILLCKFFLCISFFFSIPLNFIATYPSMISLYTSIRNKIQKLYSVLFTRNEYLPSFSNILRYDTENPFDEYTLDENTENSSTSESQGDDMFQRKCAAIFVTCLCAFVEFNVSKLSNFIGIFGGFTSSIISCILPNLIYYKNMHTFKNKIERYATLALLCFFSVIGLISSIVTAFIIIY.

11 consecutive transmembrane segments (helical) span residues 184 to 216, 222 to 243, 255 to 275, 295 to 311, 318 to 340, 360 to 380, 401 to 417, 437 to 459, 531 to 547, 553 to 575, and 587 to 613; these read VLFL…LILL, YITT…YGNL, LIDF…LILV, RIFI…PLTF, INCF…GYQS, HFFK…NACF, ILIQ…LGYL, SILL…NFIA, CAAI…EFNV, FIGI…LIYY, and RYAT…FIII.

It belongs to the amino acid/polyamine transporter 2 family.

The protein resides in the vacuole membrane. In terms of biological role, putative amino acid transporter. Involved in maintaining the osmotic homeostasis of the digestive vacuole. Important for the timely development and growth of the asexual-stage parasites and male gametocyte maturation. This is Putative amino acid transporter AAT1 from Plasmodium berghei (strain Anka).